The chain runs to 276 residues: Large ribosomal subunit protein uL2 (276 aa).

2 disordered regions span residues 33 to 55 (LVEAQGRSGGRNNNGRITSRHIG) and 221 to 276 (RGTA…AKKK).

It belongs to the universal ribosomal protein uL2 family. Part of the 50S ribosomal subunit. Forms a bridge to the 30S subunit in the 70S ribosome.

Its function is as follows. One of the primary rRNA binding proteins. Required for association of the 30S and 50S subunits to form the 70S ribosome, for tRNA binding and peptide bond formation. It has been suggested to have peptidyltransferase activity; this is somewhat controversial. Makes several contacts with the 16S rRNA in the 70S ribosome. This Psychrobacter sp. (strain PRwf-1) protein is Large ribosomal subunit protein uL2.